A 97-amino-acid chain; its full sequence is Large ribosomal subunit protein uL23 (97 aa).

It belongs to the universal ribosomal protein uL23 family. Part of the 50S ribosomal subunit. Contacts protein L29, and trigger factor when it is bound to the ribosome.

Functionally, one of the early assembly proteins it binds 23S rRNA. One of the proteins that surrounds the polypeptide exit tunnel on the outside of the ribosome. Forms the main docking site for trigger factor binding to the ribosome. The chain is Large ribosomal subunit protein uL23 from Sinorhizobium fredii (strain NBRC 101917 / NGR234).